Reading from the N-terminus, the 174-residue chain is Protein TM_1551 (174 aa).

The 173-residue stretch at 2 to 174 (IGEHPYVKWA…IYRFTVERYK (173 aa)) folds into the AMMECR1 domain.

This Thermotoga maritima (strain ATCC 43589 / DSM 3109 / JCM 10099 / NBRC 100826 / MSB8) protein is Protein TM_1551.